The following is a 196-amino-acid chain: MKIIIINTNCSNLSSVKIMLNKLGCNTIITDDPDLIIQSDKILLPGVGTANTAMKQLKKKNLIQLIKKCTQPTLGICLGMQLFGSFSNENTHTNTLNIINVPVKHMYSPTLPIPHMGWNNITILKKHDLLNGINNNHYFYFAHSYCMELNYTTIAYTNYGQPFSSVIVYKNFFGVQFHPEKSSFSGEQLIKNFLEI.

The 195-residue stretch at 2-196 folds into the Glutamine amidotransferase type-1 domain; sequence KIIIINTNCS…EQLIKNFLEI (195 aa). Catalysis depends on cysteine 77, which acts as the Nucleophile. Residues histidine 178 and glutamate 180 contribute to the active site.

As to quaternary structure, heterodimer of HisH and HisF.

It is found in the cytoplasm. It carries out the reaction 5-[(5-phospho-1-deoxy-D-ribulos-1-ylimino)methylamino]-1-(5-phospho-beta-D-ribosyl)imidazole-4-carboxamide + L-glutamine = D-erythro-1-(imidazol-4-yl)glycerol 3-phosphate + 5-amino-1-(5-phospho-beta-D-ribosyl)imidazole-4-carboxamide + L-glutamate + H(+). It catalyses the reaction L-glutamine + H2O = L-glutamate + NH4(+). Its pathway is amino-acid biosynthesis; L-histidine biosynthesis; L-histidine from 5-phospho-alpha-D-ribose 1-diphosphate: step 5/9. IGPS catalyzes the conversion of PRFAR and glutamine to IGP, AICAR and glutamate. The HisH subunit catalyzes the hydrolysis of glutamine to glutamate and ammonia as part of the synthesis of IGP and AICAR. The resulting ammonia molecule is channeled to the active site of HisF. The polypeptide is Imidazole glycerol phosphate synthase subunit HisH (Blochmanniella floridana).